The following is a 425-amino-acid chain: Elongation factor 1-alpha (425 aa).

Positions Lys-5–Thr-221 constitute a tr-type G domain. The tract at residues Gly-14–Ser-21 is G1. Gly-14–Ser-21 contributes to the GTP binding site. Ser-21 is a binding site for Mg(2+). Positions Gly-70–Asp-74 are G2. Residues Asp-91–Gly-94 are G3. GTP is bound by residues Asp-91–His-95 and Asn-146–Asp-149. The tract at residues Asn-146–Asp-149 is G4. The tract at residues Ser-185–Phe-187 is G5.

This sequence belongs to the TRAFAC class translation factor GTPase superfamily. Classic translation factor GTPase family. EF-Tu/EF-1A subfamily.

It is found in the cytoplasm. The catalysed reaction is GTP + H2O = GDP + phosphate + H(+). In terms of biological role, GTP hydrolase that promotes the GTP-dependent binding of aminoacyl-tRNA to the A-site of ribosomes during protein biosynthesis. This is Elongation factor 1-alpha from Methanoculleus marisnigri (strain ATCC 35101 / DSM 1498 / JR1).